We begin with the raw amino-acid sequence, 210 residues long: Ribosomal RNA small subunit methyltransferase G (210 aa).

S-adenosyl-L-methionine-binding positions include L78, 124–125 (IE), and R138.

Belongs to the methyltransferase superfamily. RNA methyltransferase RsmG family.

Its subcellular location is the cytoplasm. The catalysed reaction is guanosine(527) in 16S rRNA + S-adenosyl-L-methionine = N(7)-methylguanosine(527) in 16S rRNA + S-adenosyl-L-homocysteine. Functionally, specifically methylates the N7 position of guanine in position 527 of 16S rRNA. The chain is Ribosomal RNA small subunit methyltransferase G from Bordetella bronchiseptica (strain ATCC BAA-588 / NCTC 13252 / RB50) (Alcaligenes bronchisepticus).